The sequence spans 252 residues: Ribosomal RNA small subunit methyltransferase A (252 aa).

S-adenosyl-L-methionine is bound by residues N11, L13, G38, E60, D82, and N99.

The protein belongs to the class I-like SAM-binding methyltransferase superfamily. rRNA adenine N(6)-methyltransferase family. RsmA subfamily.

It is found in the cytoplasm. It catalyses the reaction adenosine(1518)/adenosine(1519) in 16S rRNA + 4 S-adenosyl-L-methionine = N(6)-dimethyladenosine(1518)/N(6)-dimethyladenosine(1519) in 16S rRNA + 4 S-adenosyl-L-homocysteine + 4 H(+). Its function is as follows. Specifically dimethylates two adjacent adenosines (A1518 and A1519) in the loop of a conserved hairpin near the 3'-end of 16S rRNA in the 30S particle. May play a critical role in biogenesis of 30S subunits. This chain is Ribosomal RNA small subunit methyltransferase A, found in Hydrogenobaculum sp. (strain Y04AAS1).